Consider the following 868-residue polypeptide: Probable inorganic carbon transporter subunit DabA (868 aa).

Residues Cys-392, Asp-394, His-574, and Cys-589 each coordinate Zn(2+).

Belongs to the inorganic carbon transporter (TC 9.A.2) DabA family. In terms of assembly, forms a complex with DabB. Requires Zn(2+) as cofactor.

It localises to the cell membrane. Its function is as follows. Part of an energy-coupled inorganic carbon pump. The polypeptide is Probable inorganic carbon transporter subunit DabA (Bacillus cereus (strain B4264)).